We begin with the raw amino-acid sequence, 124 residues long: Large ribosomal subunit protein bL12 (124 aa).

It belongs to the bacterial ribosomal protein bL12 family. As to quaternary structure, homodimer. Part of the ribosomal stalk of the 50S ribosomal subunit. Forms a multimeric L10(L12)X complex, where L10 forms an elongated spine to which 2 to 4 L12 dimers bind in a sequential fashion. Binds GTP-bound translation factors.

Forms part of the ribosomal stalk which helps the ribosome interact with GTP-bound translation factors. Is thus essential for accurate translation. The sequence is that of Large ribosomal subunit protein bL12 from Cupriavidus pinatubonensis (strain JMP 134 / LMG 1197) (Cupriavidus necator (strain JMP 134)).